The sequence spans 1813 residues: Nonribosomal peptide synthetase 1 (1813 aa).

Residues 89–494 form an adenylation region; the sequence is EKARRDPSRQ…GRGDQQVKLR (406 aa). A Carrier 1 domain is found at 624-699; it reads EPQSERERQL…ELAITLKHSD (76 aa). At Ser-660 the chain carries O-(pantetheine 4'-phosphoryl)serine. Residues 738–1159 are condensation 1; the sequence is DVYPCTTLQE…LPMTDDELAE (422 aa). In terms of domain architecture, Carrier 2 spans 1282 to 1358; sequence QVTTPKQQKL…DMADIAKESL (77 aa). At Ser-1319 the chain carries O-(pantetheine 4'-phosphoryl)serine. The interval 1427–1806 is condensation 2; the sequence is FYLDAAVDQS…STLFQTDVME (380 aa).

The protein belongs to the NRP synthetase family.

It participates in siderophore biosynthesis. Functionally, nonribosomal peptide synthetase; part of the gene cluster that mediates the biosynthesis of hydroxamate-containing siderophores that play a critical role in virulence via intracellular iron acquisition during macrophage infection. This chain is Nonribosomal peptide synthetase 1, found in Ajellomyces capsulatus (Darling's disease fungus).